The following is a 213-amino-acid chain: ATP-dependent Clp protease proteolytic subunit (213 aa).

Ser-114 acts as the Nucleophile in catalysis. His-139 is an active-site residue.

Belongs to the peptidase S14 family. As to quaternary structure, fourteen ClpP subunits assemble into 2 heptameric rings which stack back to back to give a disk-like structure with a central cavity, resembling the structure of eukaryotic proteasomes.

It is found in the cytoplasm. It catalyses the reaction Hydrolysis of proteins to small peptides in the presence of ATP and magnesium. alpha-casein is the usual test substrate. In the absence of ATP, only oligopeptides shorter than five residues are hydrolyzed (such as succinyl-Leu-Tyr-|-NHMec, and Leu-Tyr-Leu-|-Tyr-Trp, in which cleavage of the -Tyr-|-Leu- and -Tyr-|-Trp bonds also occurs).. Functionally, cleaves peptides in various proteins in a process that requires ATP hydrolysis. Has a chymotrypsin-like activity. Plays a major role in the degradation of misfolded proteins. The protein is ATP-dependent Clp protease proteolytic subunit of Pseudomonas putida (strain ATCC 47054 / DSM 6125 / CFBP 8728 / NCIMB 11950 / KT2440).